The chain runs to 396 residues: Putative F-box/kelch-repeat protein At4g11770 (396 aa).

The F-box domain maps to 9-55 (PCNMPYLPDDLLLNILGRVSRLYYPILSLVSKRFRSLVGSLELYKIR). Kelch repeat units follow at residues 151 to 197 (YIYM…VLDG), 198 to 248 (KIYV…YEEK), and 250 to 296 (YLFG…VFYK).

This is Putative F-box/kelch-repeat protein At4g11770 from Arabidopsis thaliana (Mouse-ear cress).